The primary structure comprises 180 residues: Acireductone dioxygenase (180 aa).

Fe(2+) is bound by residues His-97, His-99, Glu-103, and His-141. The Ni(2+) site is built by His-97, His-99, Glu-103, and His-141.

Belongs to the acireductone dioxygenase (ARD) family. In terms of assembly, monomer. It depends on Fe(2+) as a cofactor. The cofactor is Ni(2+).

It catalyses the reaction 1,2-dihydroxy-5-(methylsulfanyl)pent-1-en-3-one + O2 = 3-(methylsulfanyl)propanoate + CO + formate + 2 H(+). It carries out the reaction 1,2-dihydroxy-5-(methylsulfanyl)pent-1-en-3-one + O2 = 4-methylsulfanyl-2-oxobutanoate + formate + 2 H(+). It participates in amino-acid biosynthesis; L-methionine biosynthesis via salvage pathway; L-methionine from S-methyl-5-thio-alpha-D-ribose 1-phosphate: step 5/6. Its function is as follows. Catalyzes 2 different reactions between oxygen and the acireductone 1,2-dihydroxy-3-keto-5-methylthiopentene (DHK-MTPene) depending upon the metal bound in the active site. Fe-containing acireductone dioxygenase (Fe-ARD) produces formate and 2-keto-4-methylthiobutyrate (KMTB), the alpha-ketoacid precursor of methionine in the methionine recycle pathway. Ni-containing acireductone dioxygenase (Ni-ARD) produces methylthiopropionate, carbon monoxide and formate, and does not lie on the methionine recycle pathway. In Yersinia enterocolitica serotype O:8 / biotype 1B (strain NCTC 13174 / 8081), this protein is Acireductone dioxygenase.